Consider the following 278-residue polypeptide: Large ribosomal subunit protein uL2c (278 aa).

A disordered region spans residues 224 to 267 (VVMNPVDHPHGGGEGRAPIGRKKPLTPWGHTALGGRSRKNHKYS).

This sequence belongs to the universal ribosomal protein uL2 family. As to quaternary structure, part of the 50S ribosomal subunit.

Its subcellular location is the plastid. It is found in the chloroplast. This chain is Large ribosomal subunit protein uL2c (rpl2), found in Huperzia lucidula (Shining clubmoss).